The primary structure comprises 94 residues: Large ribosomal subunit protein uL23 (94 aa).

The protein belongs to the universal ribosomal protein uL23 family. Part of the 50S ribosomal subunit. Contacts protein L29, and trigger factor when it is bound to the ribosome.

Its function is as follows. One of the early assembly proteins it binds 23S rRNA. One of the proteins that surrounds the polypeptide exit tunnel on the outside of the ribosome. Forms the main docking site for trigger factor binding to the ribosome. This chain is Large ribosomal subunit protein uL23, found in Dehalococcoides mccartyi (strain ATCC BAA-2100 / JCM 16839 / KCTC 5957 / BAV1).